A 716-amino-acid polypeptide reads, in one-letter code: MMSIRQRREIRATEVSEDFPAQEENVKLENKLPSGCTSRRLWKILSLTIGGTIALCIGLLTSVYLATLHENDLWFSNIKEVEREISFRTECGLYYSYYKQMLQAPTLVQGFYGLIYDNKTESMKTINLLQRMNIYQEVFLSILYRVLPVQKYLEPVYFYIYTLFGLQAIYVTALYITSWLLSGTWLSGLLAAFWYVTNRIDTTRVEFTIPLRENWALPFFAIQIAAITYFLRPNLQPLSERLTLLAIFISTFLFSLTWQFNQFMMLMQALVLFTLDSLDMLPAVKATWLYGIQITSLLLVCILQFFNSMILGSLLISFNLSVFIARKLQKNLKTGSFLNRLGKLLLHLFMVLCLTLFLNNIIKKILNLKSDEHIFKFLKAKFGLGATRDFDANLYLCEEAFGLLPFNTFGRLSDTLLFYAYIFVLSITVIVAFVVAFHNLSDSTNQQSVGKMEKGTVDLKPETAYNLIHTILFGFLALSTMRMKYLWTSHMCVFASFGLCSPEIWELLLKSVHLYNPKRICIMRYSVPILILLYLCYKFWPGMMDELSELREFYDPDTVELMNWINSNTPRKAVFAGSMQLLAGVKLCTGRTLTNHPHYEDSSLRERTRAVYQIYAKRAPEEVHALLRSFGTDYVILEDSICYERRHRRGCRLRDLLDIANGHMMDGPGENDPDLKPADHPRFCEEIKRNLPPYVAYFTRVFQNKTFHVYKLSRNK.

Topologically, residues 1-43 (MMSIRQRREIRATEVSEDFPAQEENVKLENKLPSGCTSRRLWK) are cytoplasmic. A helical transmembrane segment spans residues 44–64 (ILSLTIGGTIALCIGLLTSVY). Over 65–154 (LATLHENDLW…RVLPVQKYLE (90 aa)) the chain is Lumenal. Residue Asn118 is glycosylated (N-linked (GlcNAc...) asparagine). Residues 155 to 182 (PVYFYIYTLFGLQAIYVTALYITSWLLS) traverse the membrane as a helical segment. The Cytoplasmic portion of the chain corresponds to 183–184 (GT). Positions 185–197 (WLSGLLAAFWYVT) form an intramembrane region, name=3. Residues 198–215 (NRIDTTRVEFTIPLRENW) are Cytoplasmic-facing. Positions 216-230 (ALPFFAIQIAAITYF) form an intramembrane region, name=4. The Cytoplasmic portion of the chain corresponds to 231-239 (LRPNLQPLS). The chain crosses the membrane as a helical span at residues 240 to 256 (ERLTLLAIFISTFLFSL). Residues 257–262 (TWQFNQ) lie on the Lumenal side of the membrane. Residues 263 to 279 (FMMLMQALVLFTLDSLD) form a helical membrane-spanning segment. Residues 280–289 (MLPAVKATWL) lie on the Cytoplasmic side of the membrane. Residues 290 to 306 (YGIQITSLLLVCILQFF) form a helical membrane-spanning segment. Topologically, residues 307–308 (NS) are lumenal. Residues 309–323 (MILGSLLISFNLSVF) form a helical membrane-spanning segment. At 324 to 338 (IARKLQKNLKTGSFL) the chain is on the cytoplasmic side. Residues 339-359 (NRLGKLLLHLFMVLCLTLFLN) form a helical membrane-spanning segment. Over 360–414 (NIIKKILNLKSDEHIFKFLKAKFGLGATRDFDANLYLCEEAFGLLPFNTFGRLSD) the chain is Lumenal. Residues 415–437 (TLLFYAYIFVLSITVIVAFVVAF) form a helical membrane-spanning segment. Over 438-465 (HNLSDSTNQQSVGKMEKGTVDLKPETAY) the chain is Cytoplasmic. Residues 466 to 485 (NLIHTILFGFLALSTMRMKY) traverse the membrane as a helical segment. The Lumenal segment spans residues 486–487 (LW). The chain crosses the membrane as a helical span at residues 488–499 (TSHMCVFASFGL). Over 500-522 (CSPEIWELLLKSVHLYNPKRICI) the chain is Cytoplasmic. Residues 523 to 539 (MRYSVPILILLYLCYKF) traverse the membrane as a helical segment. Topologically, residues 540 to 716 (WPGMMDELSE…FHVYKLSRNK (177 aa)) are lumenal. Asn704 carries an N-linked (GlcNAc...) asparagine glycan.

This sequence belongs to the dpy-19 family.

It localises to the endoplasmic reticulum membrane. It catalyses the reaction L-tryptophyl-[protein] + a di-trans,poly-cis-dolichyl beta-D-mannosyl phosphate = C-alpha-D-mannosyl-L-tryptophyl-[protein] + a di-trans,poly-cis-dolichyl phosphate + H(+). It functions in the pathway protein modification; protein glycosylation. C-mannosyltransferase that mediates C-mannosylation of tryptophan residues on target proteins. The reaction occurs on the luminal side of the endoplasmic reticulum and involves the transfer of a mannose unit from a dolichylphosphate mannose (Dol-P-Man) donor to an acceptor protein containing a WxxW or WxxC consensus sequence. C-mannosylates RSPO1, a Wnt signaling regulator, preferentially at the first Trp residue in the sequence WxxW. C-mannosylates the netrin receptor UNC5A, preferentially at the third tryptophan of WxxWxxWxxC sequence. The protein is Protein C-mannosyl-transferase DPY19L3 (DPY19L3) of Pongo abelii (Sumatran orangutan).